Consider the following 400-residue polypeptide: NADH dehydrogenase-like protein MT1860 (400 aa).

This sequence belongs to the NADH dehydrogenase family. The cofactor is FAD.

This chain is NADH dehydrogenase-like protein MT1860, found in Mycobacterium tuberculosis (strain CDC 1551 / Oshkosh).